A 122-amino-acid polypeptide reads, in one-letter code: Vitelline membrane protein 15a-3 (122 aa).

A signal peptide spans 1–17; sequence MNKFIILALFAVAAASA. Residues 21–49 are compositionally biased toward pro residues; that stretch reads YPPPPPKPYHAPPPPPHHAHPPPPPPPPA. 2 disordered regions span residues 21–63 and 103–122; these read YPPP…APVV and PAPAPHYRAPESDSFDQFEE. The VM domain occupies 69–109; that stretch reads HAPHAKCGANLLVGCAPSVAHAPCVPLHGHGHGYPAPAPHY.

The protein belongs to the vitelline membrane protein family. In terms of tissue distribution, expressed in the middle and posterior regions of the follicle cells.

It is found in the secreted. The polypeptide is Vitelline membrane protein 15a-3 (Aedes aegypti (Yellowfever mosquito)).